The sequence spans 525 residues: Glutamate--cysteine ligase (525 aa).

The protein belongs to the glutamate--cysteine ligase type 1 family. Type 1 subfamily.

The catalysed reaction is L-cysteine + L-glutamate + ATP = gamma-L-glutamyl-L-cysteine + ADP + phosphate + H(+). It participates in sulfur metabolism; glutathione biosynthesis; glutathione from L-cysteine and L-glutamate: step 1/2. This chain is Glutamate--cysteine ligase, found in Vibrio vulnificus (strain CMCP6).